Consider the following 519-residue polypeptide: Sterile alpha motif domain-containing protein 1 (519 aa).

The segment covering 1-11 (MAGPPALPPPE) has biased composition (pro residues). Disordered regions lie at residues 1 to 30 (MAGPPALPPPETAAAATTAAAASSSAASPH) and 87 to 232 (YKGS…PVSL). Residues 12-29 (TAAAATTAAAASSSAASP) show a composition bias toward low complexity. The SAMD1-like winged helix (WH) domain maps to 23-99 (SSSAASPHYQ…SISYRNAARV (77 aa)). Residue Thr-107 is modified to Phosphothreonine. The segment covering 108-133 (PPAPPRVPRGGPAAPPPTPAPPPAPV) has biased composition (pro residues). A compositionally biased stretch (low complexity) spans 134-147 (AAPTRAPRAAAATA). Ser-150 is subject to Phosphoserine. Low complexity predominate over residues 157–166 (GPRAQRAAPL). A compositionally biased stretch (pro residues) spans 167-217 (AAPPPAPAAPPAAAPPAGPRRAPPPAVAAREPPAPPQQQQPPPPQPQPPPE). Positions 218-230 (GGAARAGGPARPV) are enriched in low complexity. Ser-242 bears the Phosphoserine mark. Over residues 261–271 (EAARGRLERTR) the composition is skewed to basic and acidic residues. Disordered regions lie at residues 261-381 (EAAR…PGSC) and 417-439 (PALPGADGTPFGCPPGRKEKPTD). The segment covering 308–325 (KEEEDEDEDEEEEEEDNV) has biased composition (acidic residues). The SAM domain maps to 443-511 (WTVMDVVEYF…KVLQQGHFED (69 aa)).

In terms of assembly, homopolymerize into a closed pentameric ring. Interacts (via SAM domain) with L3MBTL3 (via SAM domain); the interaction mediates L3MBTL3 binding to chromatin. Interacts (via WH domain) with KDM1A; the interaction modulates KDM1A function. Expressed to similar levels in different organs. Expressed at higher levels in bone marrow, osteoclasts and spleen. Expressed in vascular smooth muscle cells.

The protein resides in the nucleus. It localises to the chromosome. Its subcellular location is the secreted. In terms of biological role, unmethylated CpG islands (CGIs)-binding protein which localizes to H3K4me3-decorated CGIs, where it acts as a transcriptional repressor. Tethers L3MBTL3 to chromatin and interacts with the KDM1A histone demethylase complex to modulate H3K4me2 and H3K4me3 levels at CGIs. Plays a role in atherogenesis by binding with LDL on cell surface and promoting LDL oxidation which leads to the formation of foam cell. This chain is Sterile alpha motif domain-containing protein 1, found in Mus musculus (Mouse).